Reading from the N-terminus, the 264-residue chain is Hydroxyethylthiazole kinase (264 aa).

Residue methionine 52 participates in substrate binding. The ATP site is built by arginine 127 and threonine 173. Glycine 200 serves as a coordination point for substrate.

Belongs to the Thz kinase family. Mg(2+) is required as a cofactor.

The enzyme catalyses 5-(2-hydroxyethyl)-4-methylthiazole + ATP = 4-methyl-5-(2-phosphooxyethyl)-thiazole + ADP + H(+). It participates in cofactor biosynthesis; thiamine diphosphate biosynthesis; 4-methyl-5-(2-phosphoethyl)-thiazole from 5-(2-hydroxyethyl)-4-methylthiazole: step 1/1. Catalyzes the phosphorylation of the hydroxyl group of 4-methyl-5-beta-hydroxyethylthiazole (THZ). This chain is Hydroxyethylthiazole kinase, found in Pectobacterium carotovorum subsp. carotovorum (strain PC1).